Here is a 147-residue protein sequence, read N- to C-terminus: 3-dehydroquinate dehydratase (147 aa).

Tyrosine 23 (proton acceptor) is an active-site residue. Substrate contacts are provided by asparagine 74, histidine 80, and aspartate 87. Catalysis depends on histidine 100, which acts as the Proton donor. Residues 101–102 (LS) and arginine 111 contribute to the substrate site.

The protein belongs to the type-II 3-dehydroquinase family. In terms of assembly, homododecamer.

It catalyses the reaction 3-dehydroquinate = 3-dehydroshikimate + H2O. Its pathway is metabolic intermediate biosynthesis; chorismate biosynthesis; chorismate from D-erythrose 4-phosphate and phosphoenolpyruvate: step 3/7. Its function is as follows. Catalyzes a trans-dehydration via an enolate intermediate. This chain is 3-dehydroquinate dehydratase, found in Clostridium botulinum (strain Okra / Type B1).